The sequence spans 171 residues: S-ribosylhomocysteine lyase (171 aa).

Fe cation-binding residues include histidine 54, histidine 58, and cysteine 128.

This sequence belongs to the LuxS family. As to quaternary structure, homodimer. Fe cation serves as cofactor.

The catalysed reaction is S-(5-deoxy-D-ribos-5-yl)-L-homocysteine = (S)-4,5-dihydroxypentane-2,3-dione + L-homocysteine. Its function is as follows. Involved in the synthesis of autoinducer 2 (AI-2) which is secreted by bacteria and is used to communicate both the cell density and the metabolic potential of the environment. The regulation of gene expression in response to changes in cell density is called quorum sensing. Catalyzes the transformation of S-ribosylhomocysteine (RHC) to homocysteine (HC) and 4,5-dihydroxy-2,3-pentadione (DPD). The sequence is that of S-ribosylhomocysteine lyase from Aliarcobacter butzleri (strain RM4018) (Arcobacter butzleri).